Consider the following 160-residue polypeptide: Cytochrome b6-f complex subunit 4 (160 aa).

3 helical membrane passes run 36 to 56, 95 to 115, and 131 to 151; these read LLYVFPVVILGTIACSIGLAI, LLGVLSMAAVPAGLLTVPFIE, and TIFLISTVITIWLGIGATMPI.

This sequence belongs to the cytochrome b family. PetD subfamily. In terms of assembly, the 4 large subunits of the cytochrome b6-f complex are cytochrome b6, subunit IV (17 kDa polypeptide, petD), cytochrome f and the Rieske protein, while the 4 small subunits are petG, petL, petM and petN. The complex functions as a dimer.

Its subcellular location is the plastid. It localises to the chloroplast thylakoid membrane. Component of the cytochrome b6-f complex, which mediates electron transfer between photosystem II (PSII) and photosystem I (PSI), cyclic electron flow around PSI, and state transitions. This chain is Cytochrome b6-f complex subunit 4, found in Porphyra purpurea (Red seaweed).